The chain runs to 539 residues: Chaperonin GroEL 2 (539 aa).

ATP-binding positions include 30–33, Lys51, 87–91, Gly415, 480–482, and Asp496; these read TLGP, DGTTT, and NAA.

This sequence belongs to the chaperonin (HSP60) family. As to quaternary structure, forms a cylinder of 14 subunits composed of two heptameric rings stacked back-to-back. Interacts with the co-chaperonin GroES.

The protein localises to the cytoplasm. It carries out the reaction ATP + H2O + a folded polypeptide = ADP + phosphate + an unfolded polypeptide.. In terms of biological role, together with its co-chaperonin GroES, plays an essential role in assisting protein folding. The GroEL-GroES system forms a nano-cage that allows encapsulation of the non-native substrate proteins and provides a physical environment optimized to promote and accelerate protein folding. The protein is Chaperonin GroEL 2 of Sphingopyxis alaskensis (strain DSM 13593 / LMG 18877 / RB2256) (Sphingomonas alaskensis).